The chain runs to 328 residues: Biotin synthase (328 aa).

The Radical SAM core domain maps to 48 to 275 (NRIQLSKLLN…KSHVRLTAGR (228 aa)). Positions 63, 67, and 70 each coordinate [4Fe-4S] cluster. The [2Fe-2S] cluster site is built by cysteine 107, cysteine 138, cysteine 198, and arginine 270.

It belongs to the radical SAM superfamily. Biotin synthase family. In terms of assembly, homodimer. It depends on [4Fe-4S] cluster as a cofactor. Requires [2Fe-2S] cluster as cofactor.

It carries out the reaction (4R,5S)-dethiobiotin + (sulfur carrier)-SH + 2 reduced [2Fe-2S]-[ferredoxin] + 2 S-adenosyl-L-methionine = (sulfur carrier)-H + biotin + 2 5'-deoxyadenosine + 2 L-methionine + 2 oxidized [2Fe-2S]-[ferredoxin]. It participates in cofactor biosynthesis; biotin biosynthesis; biotin from 7,8-diaminononanoate: step 2/2. Its function is as follows. Catalyzes the conversion of dethiobiotin (DTB) to biotin by the insertion of a sulfur atom into dethiobiotin via a radical-based mechanism. The polypeptide is Biotin synthase (Brucella abortus (strain S19)).